Consider the following 596-residue polypeptide: Probable protein S-acyltransferase 22 (596 aa).

2 helical membrane-spanning segments follow: residues 15 to 35 (VVAV…FAPF) and 44 to 64 (IAMG…IWCA). Residues 102–125 (TGGAKSHDGTCVEDTENGSNKKLE) are disordered. One can recognise a DHHC domain in the interval 163-213 (FYCSLCEVEVFKYSKHCRVCDKCVDRFDHHCRWLNNCIGKRNYRKFFSLMV). Catalysis depends on C193, which acts as the S-palmitoyl cysteine intermediate. 2 helical membrane-spanning segments follow: residues 215–235 (AIFL…LCLL) and 254–274 (LIPF…ATLP). 3 disordered regions span residues 433 to 455 (SGRR…RRQS), 498 to 523 (QTSR…DSHD), and 549 to 596 (MGQQ…HKSR). The span at 498–518 (QTSRAMSGSGNVMVTSSPESS) shows a compositional bias: polar residues. Residues 549–571 (MGQQRGQQQQQQLSMMMMPLSRS) are compositionally biased toward low complexity.

It belongs to the DHHC palmitoyltransferase family.

It is found in the cell membrane. Its subcellular location is the cytoplasmic vesicle membrane. It catalyses the reaction L-cysteinyl-[protein] + hexadecanoyl-CoA = S-hexadecanoyl-L-cysteinyl-[protein] + CoA. Functionally, palmitoyl acyltransferase. The polypeptide is Probable protein S-acyltransferase 22 (PAT22) (Arabidopsis thaliana (Mouse-ear cress)).